We begin with the raw amino-acid sequence, 1626 residues long: DNA topoisomerase 2-beta (1626 aa).

Ala2 is modified (N-acetylalanine). Lys3 bears the N6-acetyllysine mark. Glycyl lysine isopeptide (Lys-Gly) (interchain with G-Cter in SUMO2) cross-links involve residues Gln28, Asn29, Lys33, and Lys34. ATP is bound by residues Asn112, Asn141, and 169-171; that span reads SSN. Residues Lys177 and Lys178 each participate in a glycyl lysine isopeptide (Lys-Gly) (interchain with G-Cter in SUMO2) cross-link. ATP is bound at residue 182 to 189; sequence GRNGYGAK. Residues Lys228 and Lys299 each participate in a glycyl lysine isopeptide (Lys-Gly) (interchain with G-Cter in SUMO2) cross-link. The tract at residues 363–365 is interaction with DNA; the sequence is KKK. Glycyl lysine isopeptide (Lys-Gly) (interchain with G-Cter in SUMO2) cross-links involve residues Lys367 and Lys373. 397–399 is an ATP binding site; sequence QTK. Residues Lys437, Lys439, and Lys446 each participate in a glycyl lysine isopeptide (Lys-Gly) (interchain with G-Cter in SUMO2) cross-link. The region spanning 476–593 is the Toprim domain; sequence CTLILTEGDS…SLLKHGFLEE (118 aa). Glu482, Asp562, and Asp564 together coordinate Mg(2+). Glycyl lysine isopeptide (Lys-Gly) (interchain with G-Cter in SUMO2) cross-links involve residues Lys600, Lys605, Lys635, Lys643, Lys646, Lys676, and Lys712. In terms of domain architecture, Topo IIA-type catalytic spans 736–1189; that stretch reads IPSLVDGFKP…SPSDLWKEDL (454 aa). Tyr826 functions as the O-(5'-phospho-DNA)-tyrosine intermediate in the catalytic mechanism. The segment at 1011 to 1020 is interaction with DNA; the sequence is KLQTTLTCNS. The short motif at 1034–1044 is the Nuclear export signal element; it reads ETVQDILKEFF. Lys1092 participates in a covalent cross-link: Glycyl lysine isopeptide (Lys-Gly) (interchain with G-Cter in SUMO2). The tract at residues 1110–1140 is disordered; the sequence is AWKEAQEKAAEEDETQNQHDDSSSDSGTPSG. Residues Lys1214, Lys1217, Lys1226, and Lys1227 each participate in a glycyl lysine isopeptide (Lys-Gly) (interchain with G-Cter in SUMO2) cross-link. The residue at position 1236 (Ser1236) is a Phosphoserine. Residues Lys1250, Lys1262, and Lys1271 each participate in a glycyl lysine isopeptide (Lys-Gly) (interchain with G-Cter in SUMO2) cross-link. Positions 1274–1604 are disordered; it reads FDEEFSGAPV…PSLPRTGRAR (331 aa). Thr1292 is subject to Phosphothreonine. Glycyl lysine isopeptide (Lys-Gly) (interchain with G-Cter in SUMO2) cross-links involve residues Lys1323 and Lys1327. 2 stretches are compositionally biased toward basic and acidic residues: residues 1334–1344 and 1358–1370; these read PWSDDESKSES and SLLR…RPKY. A phosphoserine mark is found at Ser1336, Ser1340, Ser1342, Ser1344, and Ser1358. The residue at position 1370 (Tyr1370) is a Phosphotyrosine. The segment covering 1374 to 1392 has biased composition (acidic residues); sequence FSEEEDDDADDDDDDNNDL. Position 1375 is a phosphoserine (Ser1375). Residue Lys1398 forms a Glycyl lysine isopeptide (Lys-Gly) (interchain with G-Cter in SUMO2) linkage. Ser1400 bears the Phosphoserine mark. Thr1403 bears the Phosphothreonine mark. Ser1413 is subject to Phosphoserine. Tyr1421 carries the phosphotyrosine modification. A Phosphoserine modification is found at Ser1424. The span at 1430 to 1442 shows a compositional bias: basic and acidic residues; the sequence is ATPEKSLHDKKSQ. Lys1440 participates in a covalent cross-link: Glycyl lysine isopeptide (Lys-Gly) (interchain with G-Cter in SUMO2). Ser1441, Ser1452, and Ser1454 each carry phosphoserine. Lys1456 participates in a covalent cross-link: Glycyl lysine isopeptide (Lys-Gly) (interchain with G-Cter in SUMO2). The span at 1456–1466 shows a compositional bias: basic and acidic residues; it reads KSEDDSAKFDS. Phosphoserine is present on residues Ser1461, Ser1466, Ser1473, and Ser1476. A Glycyl lysine isopeptide (Lys-Gly) (interchain with G-Cter in SUMO2) cross-link involves residue Lys1490. Residues 1506–1512 form an interaction with PLSCR1 region; sequence KPKRAPK. Phosphoserine is present on residues Ser1522, Ser1524, and Ser1526. The segment covering 1539–1549 has biased composition (basic residues); it reads GKGRGAKKRKA. Phosphoserine occurs at positions 1550 and 1552. Residues 1563 to 1574 show a composition bias toward basic residues; it reads KTSKTTSKKPKK. The residue at position 1575 (Thr1575) is a Phosphothreonine. Phosphoserine occurs at positions 1576 and 1581. Thr1592 bears the Phosphothreonine mark. A Phosphoserine modification is found at Ser1596. Tyr1609 bears the Phosphotyrosine mark. Ser1613 carries the phosphoserine modification.

It belongs to the type II topoisomerase family. As to quaternary structure, homodimer. Interacts with KIAA1210. Interacts with PLSCR1. Requires Mg(2+) as cofactor. Mn(2+) is required as a cofactor. It depends on Ca(2+) as a cofactor. Post-translationally, (Microbial infection) Deubiquitinated by Epstein-Barr virus BPLF1; leading to stabilized SUMOylated TOP2A trapped in cleavage complexes, which halts the DNA damage response to TOP2A-induced double-strand DNA breaks. In terms of processing, SUMOylated. Expressed in the tonsil, spleen, lymph node, thymus, skin, pancreas, testis, colon, kidney, liver, brain and lung. Also found in breast, colon and lung carcinomas, Hodgkin's disease, large-cell non-Hodgkin's lymphoma, lymphocytic lymphomas and seminomas.

It localises to the nucleus. The protein resides in the nucleolus. The protein localises to the nucleoplasm. The enzyme catalyses ATP-dependent breakage, passage and rejoining of double-stranded DNA.. Its function is as follows. Key decatenating enzyme that alters DNA topology by binding to two double-stranded DNA molecules, generating a double-stranded break in one of the strands, passing the intact strand through the broken strand, and religating the broken strand. Plays a role in B-cell differentiation. This chain is DNA topoisomerase 2-beta (TOP2B), found in Homo sapiens (Human).